The chain runs to 384 residues: S-adenosylmethionine synthase (384 aa).

H15 is a binding site for ATP. D17 is a binding site for Mg(2+). E43 is a binding site for K(+). 2 residues coordinate L-methionine: E56 and Q99. The flexible loop stretch occupies residues 99-109 (QSPDINQGVDR). Residues 164 to 166 (DAK), 230 to 231 (RF), D239, 245 to 246 (RK), A262, and K266 each bind ATP. D239 contacts L-methionine. K270 contributes to the L-methionine binding site.

It belongs to the AdoMet synthase family. In terms of assembly, homotetramer; dimer of dimers. It depends on Mg(2+) as a cofactor. Requires K(+) as cofactor.

Its subcellular location is the cytoplasm. The enzyme catalyses L-methionine + ATP + H2O = S-adenosyl-L-methionine + phosphate + diphosphate. It participates in amino-acid biosynthesis; S-adenosyl-L-methionine biosynthesis; S-adenosyl-L-methionine from L-methionine: step 1/1. Functionally, catalyzes the formation of S-adenosylmethionine (AdoMet) from methionine and ATP. The overall synthetic reaction is composed of two sequential steps, AdoMet formation and the subsequent tripolyphosphate hydrolysis which occurs prior to release of AdoMet from the enzyme. The polypeptide is S-adenosylmethionine synthase (Escherichia fergusonii (strain ATCC 35469 / DSM 13698 / CCUG 18766 / IAM 14443 / JCM 21226 / LMG 7866 / NBRC 102419 / NCTC 12128 / CDC 0568-73)).